The primary structure comprises 109 residues: Nucleoid-associated protein ETA_24730 (109 aa).

It belongs to the YbaB/EbfC family. Homodimer.

The protein localises to the cytoplasm. It localises to the nucleoid. Functionally, binds to DNA and alters its conformation. May be involved in regulation of gene expression, nucleoid organization and DNA protection. The protein is Nucleoid-associated protein ETA_24730 of Erwinia tasmaniensis (strain DSM 17950 / CFBP 7177 / CIP 109463 / NCPPB 4357 / Et1/99).